The following is a 1004-amino-acid chain: Outer cell wall protein (1004 aa).

Residues 1-24 (MNKKVVLSVLSTTLVASVAASAFA) form the signal peptide.

The outer cell wall layer is composed of subunits of the outer cell wall protein. These proteins form a hexagonal array with a lattice constant of 14.5 nm in the outer cell wall layers.

Its subcellular location is the secreted. The protein localises to the cell wall. It localises to the S-layer. The outer wall protein binds to the middle cell wall protein. This Brevibacillus brevis (strain 47 / JCM 6285 / NBRC 100599) protein is Outer cell wall protein.